The primary structure comprises 761 residues: Centrosomal protein of 85 kDa (761 aa).

Disordered regions lie at residues 1 to 33 and 95 to 117; these read MAMQEKYPNDRSHATSPGSNVIQKGSSLGTEWQ and PSTLGASPAKPNSAPSGPSSAKL. Over residues 14–33 the composition is skewed to polar residues; it reads ATSPGSNVIQKGSSLGTEWQ. Ser16 is subject to Phosphoserine. Ser140 is modified (phosphoserine). Disordered stretches follow at residues 226–279 and 435–472; these read KAPG…GEQS and KHSEEGKKQEERVKGRDKHINNLKKKCQKESEQNREKQ. Residues 256–432 form a mediates interaction with NEK2 and is required for its function in the suppression of centrosome disjunction region; the sequence is GLSKSLSSQV…QLIRESLKVT (177 aa). Coiled coils occupy residues 333–656 and 723–749; these read EHLL…RQAQ and DVIRRKLEEVQQLRHDIEDLRTSLSDR. A required for centrosome localization and for its function in the suppression of centrosome disjunction region spans residues 433 to 475; that stretch reads LQKHSEEGKKQEERVKGRDKHINNLKKKCQKESEQNREKQQRI. 2 stretches are compositionally biased toward basic and acidic residues: residues 435 to 454 and 462 to 472; these read KHSEEGKKQEERVKGRDKHI and QKESEQNREKQ.

It belongs to the CEP85 family. Homodimer. Interacts with STIL (via N-terminus); this interaction is essential for robust PLK4 activation and efficient centriole assembly and for PLK4-dependent cell migration. Interacts with PLK4; required for CEP85 to be able to drive centriole duplication and cell migration.

The protein resides in the cytoplasm. The protein localises to the cytoskeleton. It localises to the microtubule organizing center. It is found in the centrosome. Its subcellular location is the spindle pole. The protein resides in the nucleus. The protein localises to the nucleolus. It localises to the centriole. It is found in the cell cortex. Functionally, acts as a regulator of centriole duplication through a direct interaction with STIL, a key factor involved in the early steps of centriole formation. The CEP85-STIL protein complex acts as a modulator of PLK4-driven cytoskeletal rearrangements and directional cell motility. Acts as a negative regulator of NEK2 to maintain the centrosome integrity in interphase. Suppresses centrosome disjunction by inhibiting NEK2 kinase activity. The protein is Centrosomal protein of 85 kDa (Cep85) of Mus musculus (Mouse).